We begin with the raw amino-acid sequence, 115 residues long: MAENVTSAKATAKMVRVSSRKVRLVLDTIRNKSVAEAFAILKFTPNGAASDVEKVLKSAVANAENNFDLDQASLVVSEAFANEGPTLKRFRPRAKGSASPINKRTSHITVVVAEK.

It belongs to the universal ribosomal protein uL22 family. As to quaternary structure, part of the 50S ribosomal subunit.

Its function is as follows. This protein binds specifically to 23S rRNA; its binding is stimulated by other ribosomal proteins, e.g. L4, L17, and L20. It is important during the early stages of 50S assembly. It makes multiple contacts with different domains of the 23S rRNA in the assembled 50S subunit and ribosome. The globular domain of the protein is located near the polypeptide exit tunnel on the outside of the subunit, while an extended beta-hairpin is found that lines the wall of the exit tunnel in the center of the 70S ribosome. The polypeptide is Large ribosomal subunit protein uL22 (Limosilactobacillus fermentum (strain NBRC 3956 / LMG 18251) (Lactobacillus fermentum)).